A 197-amino-acid polypeptide reads, in one-letter code: dCTP deaminase, dUMP-forming (197 aa).

DCTP contacts are provided by residues 105 to 110 (RSSIGR), aspartate 123, 131 to 133 (TLE), glutamine 152, tyrosine 166, lysine 174, and glutamine 178. Glutamate 133 acts as the Proton donor/acceptor in catalysis. The disordered stretch occupies residues 161–183 (PAERPYGHPSRDSKYIGQTRPQT). Basic and acidic residues predominate over residues 165–174 (PYGHPSRDSK).

Belongs to the dCTP deaminase family. Homotrimer.

It carries out the reaction dCTP + 2 H2O = dUMP + NH4(+) + diphosphate. The protein operates within pyrimidine metabolism; dUMP biosynthesis; dUMP from dCTP: step 1/1. Its function is as follows. Bifunctional enzyme that catalyzes both the deamination of dCTP to dUTP and the hydrolysis of dUTP to dUMP without releasing the toxic dUTP intermediate. The chain is dCTP deaminase, dUMP-forming from Methanothermobacter thermautotrophicus (strain ATCC 29096 / DSM 1053 / JCM 10044 / NBRC 100330 / Delta H) (Methanobacterium thermoautotrophicum).